The sequence spans 359 residues: N-acetyl-gamma-glutamyl-phosphate reductase (359 aa).

Cys-162 is a catalytic residue.

The protein belongs to the NAGSA dehydrogenase family. Type 1 subfamily.

The protein localises to the cytoplasm. It carries out the reaction N-acetyl-L-glutamate 5-semialdehyde + phosphate + NADP(+) = N-acetyl-L-glutamyl 5-phosphate + NADPH + H(+). Its pathway is amino-acid biosynthesis; L-arginine biosynthesis; N(2)-acetyl-L-ornithine from L-glutamate: step 3/4. Its function is as follows. Catalyzes the NADPH-dependent reduction of N-acetyl-5-glutamyl phosphate to yield N-acetyl-L-glutamate 5-semialdehyde. This is N-acetyl-gamma-glutamyl-phosphate reductase from Prochlorococcus marinus (strain NATL2A).